A 126-amino-acid chain; its full sequence is UPF0102 protein DNO_0639 (126 aa).

The protein belongs to the UPF0102 family.

This is UPF0102 protein DNO_0639 from Dichelobacter nodosus (strain VCS1703A).